The chain runs to 648 residues: Activatory protein CHA4 (648 aa).

Pro residues predominate over residues 1–10 (MMLEPSPPPL). The interval 1 to 37 (MMLEPSPPPLTTTVTPSLPSSLKKSVTDNDQNNNNVP) is disordered. Low complexity predominate over residues 11–22 (TTTVTPSLPSSL). A DNA-binding region (zn(2)-C6 fungal-type) is located at residues 44–70 (CQNCRRRRRKCNMEKPCSNCIKFRTEC). Residues 140-177 (AQSALPSSESNDENESDAFTKKMPSESPPPVGTNSIYP) are disordered. Phosphoserine is present on residues Ser-164 and Ser-166.

The protein resides in the nucleus. Functionally, activates the CHA1 gene for L-serine dehydratase. Binds to the DNA sequence 5'-GVGGARAYRTRATTCCRC-3'. This chain is Activatory protein CHA4 (CHA4), found in Saccharomyces cerevisiae (strain ATCC 204508 / S288c) (Baker's yeast).